The primary structure comprises 273 residues: NH(3)-dependent NAD(+) synthetase (273 aa).

47–54 serves as a coordination point for ATP; the sequence is GISGGQDS. Asp-53 serves as a coordination point for Mg(2+). Arg-139 lines the deamido-NAD(+) pocket. ATP is bound at residue Thr-159. Glu-164 is a binding site for Mg(2+). Deamido-NAD(+) contacts are provided by Lys-172 and Asp-179. Residues Lys-188 and Thr-210 each contribute to the ATP site. Position 259–260 (259–260) interacts with deamido-NAD(+); it reads HK.

The protein belongs to the NAD synthetase family. In terms of assembly, homodimer.

It catalyses the reaction deamido-NAD(+) + NH4(+) + ATP = AMP + diphosphate + NAD(+) + H(+). It functions in the pathway cofactor biosynthesis; NAD(+) biosynthesis; NAD(+) from deamido-NAD(+) (ammonia route): step 1/1. In terms of biological role, catalyzes the ATP-dependent amidation of deamido-NAD to form NAD. Uses ammonia as a nitrogen source. The protein is NH(3)-dependent NAD(+) synthetase of Staphylococcus aureus (strain COL).